The chain runs to 263 residues: Troponin T, slow skeletal muscle (263 aa).

Residues 1–38 (MSDAEEQEYEEEQPEEEEAAEEEEEAPEEPEPAAEPEE) show a composition bias toward acidic residues. 2 disordered regions span residues 1–64 (MSDA…RVDF) and 109–154 (AERA…KKKV). Position 2 is a phosphoserine; by CK2 (S2). Pro residues predominate over residues 44-56 (SRPVVPPLIPPKI). Over residues 109 to 150 (AERAEQQRFRTEKERERQAKLAEEKMRKEEEEAKKRAEDDAK) the composition is skewed to basic and acidic residues.

The protein belongs to the troponin T family. Interacts with TPM3. As to expression, expressed dominantly in slow muscles, like masseter, diaphragm, psoas major and spinnalis. Isoform 2 is also expressed in fast muscles.

Functionally, troponin T is the tropomyosin-binding subunit of troponin, the thin filament regulatory complex which confers calcium-sensitivity to striated muscle actomyosin ATPase activity. This Bos taurus (Bovine) protein is Troponin T, slow skeletal muscle (TNNT1).